We begin with the raw amino-acid sequence, 452 residues long: Chromosomal replication initiator protein DnaA (452 aa).

The segment at 1 to 84 (MTENEQIFWN…SIEYVFEETQ (84 aa)) is domain I, interacts with DnaA modulators. Positions 84 to 110 (QSTSNSPQISQNKTAELATETLPFVQN) are domain II. The tract at residues 111-329 (DLNPKYSFDN…GALKDISLVA (219 aa)) is domain III, AAA+ region. 4 residues coordinate ATP: glycine 155, glycine 157, lysine 158, and threonine 159. A domain IV, binds dsDNA region spans residues 330–452 (NFKKLDVITV…EMETIKNKIK (123 aa)).

This sequence belongs to the DnaA family. Oligomerizes as a right-handed, spiral filament on DNA at oriC.

The protein resides in the cytoplasm. Plays an essential role in the initiation and regulation of chromosomal replication. ATP-DnaA binds to the origin of replication (oriC) to initiate formation of the DNA replication initiation complex once per cell cycle. Binds the DnaA box (a 9 base pair repeat at the origin) and separates the double-stranded (ds)DNA. Forms a right-handed helical filament on oriC DNA; dsDNA binds to the exterior of the filament while single-stranded (ss)DNA is stabiized in the filament's interior. The ATP-DnaA-oriC complex binds and stabilizes one strand of the AT-rich DNA unwinding element (DUE), permitting loading of DNA polymerase. After initiation quickly degrades to an ADP-DnaA complex that is not apt for DNA replication. Binds acidic phospholipids. The protein is Chromosomal replication initiator protein DnaA of Streptococcus mutans serotype c (strain ATCC 700610 / UA159).